Here is a 325-residue protein sequence, read N- to C-terminus: Pyruvate dehydrogenase E1 component subunit beta (325 aa).

Residue Glu-60 coordinates thiamine diphosphate.

As to quaternary structure, heterodimer of an alpha and a beta chain. It depends on thiamine diphosphate as a cofactor.

It carries out the reaction N(6)-[(R)-lipoyl]-L-lysyl-[protein] + pyruvate + H(+) = N(6)-[(R)-S(8)-acetyldihydrolipoyl]-L-lysyl-[protein] + CO2. Functionally, the pyruvate dehydrogenase complex catalyzes the overall conversion of pyruvate to acetyl-CoA and CO(2). It contains multiple copies of three enzymatic components: pyruvate dehydrogenase (E1), dihydrolipoamide acetyltransferase (E2) and lipoamide dehydrogenase (E3). The protein is Pyruvate dehydrogenase E1 component subunit beta (pdhB) of Staphylococcus epidermidis (strain ATCC 35984 / DSM 28319 / BCRC 17069 / CCUG 31568 / BM 3577 / RP62A).